Reading from the N-terminus, the 750-residue chain is EF-hand domain-containing family member C2 (750 aa).

DM10 domains follow at residues 75-182 (DKQV…KKIG), 226-368 (DGKV…RTKY), and 430-537 (ISNI…ENNT). The 36-residue stretch at 557–592 (SKSREITQVFAAADYNHTKVVPYNTFRDILMSITMG) folds into the EF-hand domain.

In terms of assembly, microtubule inner protein component of sperm flagellar doublet microtubules.

It is found in the cytoplasm. It localises to the cytoskeleton. The protein localises to the cilium axoneme. Its subcellular location is the flagellum axoneme. Its function is as follows. Microtubule inner protein (MIP) part of the dynein-decorated doublet microtubules (DMTs) in cilia axoneme, which is required for motile cilia beating. The sequence is that of EF-hand domain-containing family member C2 (Efhc2) from Mus musculus (Mouse).